A 1136-amino-acid polypeptide reads, in one-letter code: Mitochondrial 3' processome subunit 3 (1136 aa).

The transit peptide at 1-97 (MKKAWAQLER…RGLVCTTVGD (97 aa)) directs the protein to the mitochondrion.

As to quaternary structure, component of the mitochondrial 3' processome (MPsome) complex composed at least of terminal uridylyltransferase KRET1/TUT1, 3'-5' exonuclease DSS1, MPSS1, MPSS2 and MPSS3. Within the complex, interacts with KRET1.

The protein resides in the mitochondrion. In terms of biological role, as part of the mitochondrial 3' processome (MPsome), involved in the maturation of guided RNA (gRNA) precursors. This chain is Mitochondrial 3' processome subunit 3, found in Trypanosoma brucei brucei.